Consider the following 434-residue polypeptide: 3-phosphoshikimate 1-carboxyvinyltransferase (434 aa).

Residues Lys15, Ser16, and Arg20 each coordinate 3-phosphoshikimate. Lys15 is a binding site for phosphoenolpyruvate. Phosphoenolpyruvate is bound by residues Gly96 and Arg124. Positions 169, 171, 195, 319, and 346 each coordinate 3-phosphoshikimate. Gln171 lines the phosphoenolpyruvate pocket. Asp319 functions as the Proton acceptor in the catalytic mechanism. Phosphoenolpyruvate contacts are provided by Arg350 and Arg394.

The protein belongs to the EPSP synthase family. Monomer.

The protein localises to the cytoplasm. It carries out the reaction 3-phosphoshikimate + phosphoenolpyruvate = 5-O-(1-carboxyvinyl)-3-phosphoshikimate + phosphate. It participates in metabolic intermediate biosynthesis; chorismate biosynthesis; chorismate from D-erythrose 4-phosphate and phosphoenolpyruvate: step 6/7. Functionally, catalyzes the transfer of the enolpyruvyl moiety of phosphoenolpyruvate (PEP) to the 5-hydroxyl of shikimate-3-phosphate (S3P) to produce enolpyruvyl shikimate-3-phosphate and inorganic phosphate. This chain is 3-phosphoshikimate 1-carboxyvinyltransferase, found in Chlorobaculum tepidum (strain ATCC 49652 / DSM 12025 / NBRC 103806 / TLS) (Chlorobium tepidum).